The following is a 142-amino-acid chain: uncharacterized protein (142 aa).

The disordered stretch occupies residues 19-54; it reads IHTTPHPHTPHHTHHTHTTPTPTPHPHTHTPTPERS. A compositionally biased stretch (basic residues) spans 26–35; the sequence is HTPHHTHHTH.

This is an uncharacterized protein from Saccharomyces cerevisiae (strain ATCC 204508 / S288c) (Baker's yeast).